A 728-amino-acid polypeptide reads, in one-letter code: Sodium-dependent transporter snf-5 (728 aa).

Residues 1–84 are Cytoplasmic-facing; it reads MADSGSNEEA…PEEEEEKRDG (84 aa). The interval 1 to 84 is disordered; the sequence is MADSGSNEEA…PEEEEEKRDG (84 aa). Composition is skewed to low complexity over residues 29–50 and 60–73; these read QQVS…STQS and KNTT…TLDT. A helical transmembrane segment spans residues 85–105; the sequence is FGNSFEFVLTSLGLAVGLGNI. Residues Gly-97, Ala-99, Val-100, and Asn-104 each coordinate Na(+). Topologically, residues 106–119 are extracellular; it reads WRFPTRAYNNGGSA. The chain crosses the membrane as a helical span at residues 120–140; sequence FLIPYLTCAFLFGLPAVYFEF. The Cytoplasmic portion of the chain corresponds to 141–162; the sequence is LTGQYQGKSPPVIFRRVRPILE. A helical transmembrane segment spans residues 163–183; it reads GVGWMGVFVAALVAIYYIVIV. Residues 184-285 are Extracellular-facing; the sequence is SWISIYMINI…PSSGMLDFGG (102 aa). A disulfide bridge links Cys-204 with Cys-214. Residues Asn-210, Asn-225, Asn-232, Asn-237, and Asn-257 are each glycosylated (N-linked (GlcNAc...) asparagine). Residues 286-306 traverse the membrane as a helical segment; that stretch reads FNWPVFAAMSVCWLLTGLGIL. The Cytoplasmic portion of the chain corresponds to 307–314; it reads KGAKIMGK. A helical transmembrane segment spans residues 315–335; sequence ISYVSVLVPYVLVVVLFINGV. At 336–364 the chain is on the extracellular side; it reads FQDGSGVGLEMYFGTPNYTKLYEQDTWTE. A glycan (N-linked (GlcNAc...) asparagine) is linked at Asn-352. Residues 365–386 traverse the membrane as a helical segment; sequence ALKQLCFSLSVGHGGLISLSSY. A Na(+)-binding site is contributed by Ser-372. At 387–396 the chain is on the cytoplasmic side; the sequence is SPKRNNIFRD. Residues 397–417 traverse the membrane as a helical segment; the sequence is ALIVIIGDTTMSLVGGGAVFA. Topologically, residues 418–451 are extracellular; sequence TLGYLAKATGQDVKDVVKSGLSLAFVVYPEAMTR. A helical membrane pass occupies residues 452 to 472; that stretch reads MPVPWLWCFIFFLMLFLLGAS. Residue Leu-469 coordinates Na(+). Topologically, residues 473-495 are cytoplasmic; the sequence is TEIALVDVFCSCIYDQYPRFRNR. A helical membrane pass occupies residues 496–516; that stretch reads KWIVVIAWCSVLYCIGLVFST. Topologically, residues 517 to 531 are extracellular; that stretch reads RAGYYWFEMFDEYAA. The chain crosses the membrane as a helical span at residues 532–552; sequence GFSSVCTVVCELLVMMYIYGF. Topologically, residues 553-578 are cytoplasmic; that stretch reads RNVRDDITEVVGHARNKFTGAIGAHS. The helical transmembrane segment at 579-599 threads the bilayer; the sequence is WYFTANWMVISPSIALILVGL. At 600–616 the chain is on the extracellular side; it reads SFVREYPYMGRHDIYPA. The helical transmembrane segment at 617 to 637 threads the bilayer; sequence VFDIFGWFLSFLPVIIVPIFM. Topologically, residues 638 to 728 are cytoplasmic; sequence LLNFIRCRNR…DTSSTYHQVY (91 aa). Residues 687–699 show a composition bias toward acidic residues; that stretch reads PWDEENVDLTDSE. Residues 687–728 form a disordered region; sequence PWDEENVDLTDSESESRNAASGDVPIDDVATIDTSSTYHQVY. A compositionally biased stretch (polar residues) spans 718–728; it reads IDTSSTYHQVY.

This sequence belongs to the sodium:neurotransmitter symporter (SNF) (TC 2.A.22) family. As to expression, expressed in the INT-9 cells and posterior cells of the alimentary canal of the intestine, gut epithelial cells, the pharynx of some worms, two cells of the rectal gland, and in DVA, DVB and DVC neurons and amphid sensory neurons ASI, ADF and ASK neurons.

The protein resides in the cell membrane. Functionally, sodium-dependent amino acid transporter that mediates the uptake of the L-enantiomers of various amino acids, including L-proline and L-methionine, and also of acidic amino acids such as L-glutamic acid and L-aspartic acid. May additionally have a role in potassium-dependent amino acid absorption. In response to the availability of amino acid nutrients, may play a role in dauer formation. May play a role in promoting fertility. In Caenorhabditis elegans, this protein is Sodium-dependent transporter snf-5.